The primary structure comprises 471 residues: UDP-N-acetylmuramate--L-alanine ligase (471 aa).

125–131 contributes to the ATP binding site; sequence GTHGKTT.

This sequence belongs to the MurCDEF family.

The protein resides in the cytoplasm. It catalyses the reaction UDP-N-acetyl-alpha-D-muramate + L-alanine + ATP = UDP-N-acetyl-alpha-D-muramoyl-L-alanine + ADP + phosphate + H(+). It participates in cell wall biogenesis; peptidoglycan biosynthesis. Its function is as follows. Cell wall formation. In Kineococcus radiotolerans (strain ATCC BAA-149 / DSM 14245 / SRS30216), this protein is UDP-N-acetylmuramate--L-alanine ligase.